We begin with the raw amino-acid sequence, 356 residues long: Tyrosine recombinase XerS (356 aa).

A Core-binding (CB) domain is found at 16–121 (VMPPYVLEYY…ALSSLYKYLT (106 aa)). In terms of domain architecture, Tyr recombinase spans 169-354 (GFLDYIDSEY…INEEQKNALD (186 aa)). Active-site residues include Arg210, Lys234, His306, Arg309, and His332. The active-site O-(3'-phospho-DNA)-tyrosine intermediate is the Tyr341.

It belongs to the 'phage' integrase family. XerS subfamily.

The protein localises to the cytoplasm. FtsK is required for recombination. In terms of biological role, site-specific tyrosine recombinase, which acts by catalyzing the cutting and rejoining of the recombining DNA molecules. Essential to convert dimers of the bacterial chromosome into monomers to permit their segregation at cell division. Binds an atypical recombination dif site (difSL). Binds preferentially to the left arm and cooperatively to the right arm of difSL. This chain is Tyrosine recombinase XerS, found in Lactococcus lactis subsp. cremoris (strain MG1363).